Here is a 208-residue protein sequence, read N- to C-terminus: Uracil phosphoribosyltransferase (208 aa).

Residues Arg-78, Arg-103, and 130–138 (DPMLATGGS) each bind 5-phospho-alpha-D-ribose 1-diphosphate. Uracil-binding positions include Ile-193 and 198 to 200 (GDA). Residue Asp-199 coordinates 5-phospho-alpha-D-ribose 1-diphosphate.

It belongs to the UPRTase family. Mg(2+) serves as cofactor.

It carries out the reaction UMP + diphosphate = 5-phospho-alpha-D-ribose 1-diphosphate + uracil. It participates in pyrimidine metabolism; UMP biosynthesis via salvage pathway; UMP from uracil: step 1/1. Its activity is regulated as follows. Allosterically activated by GTP. Its function is as follows. Catalyzes the conversion of uracil and 5-phospho-alpha-D-ribose 1-diphosphate (PRPP) to UMP and diphosphate. The polypeptide is Uracil phosphoribosyltransferase (Tolumonas auensis (strain DSM 9187 / NBRC 110442 / TA 4)).